The primary structure comprises 440 residues: Thymidine phosphorylase (440 aa).

It belongs to the thymidine/pyrimidine-nucleoside phosphorylase family. In terms of assembly, homodimer.

It carries out the reaction thymidine + phosphate = 2-deoxy-alpha-D-ribose 1-phosphate + thymine. The protein operates within pyrimidine metabolism; dTMP biosynthesis via salvage pathway; dTMP from thymine: step 1/2. The enzymes which catalyze the reversible phosphorolysis of pyrimidine nucleosides are involved in the degradation of these compounds and in their utilization as carbon and energy sources, or in the rescue of pyrimidine bases for nucleotide synthesis. The polypeptide is Thymidine phosphorylase (Yersinia pestis).